The chain runs to 136 residues: ATP synthase epsilon chain (136 aa).

A disordered region spans residues 112–136; it reads GNSADKLKAKESLNKARARSQAVGE. Over residues 116 to 125 the composition is skewed to basic and acidic residues; the sequence is DKLKAKESLN.

Belongs to the ATPase epsilon chain family. As to quaternary structure, F-type ATPases have 2 components, CF(1) - the catalytic core - and CF(0) - the membrane proton channel. CF(1) has five subunits: alpha(3), beta(3), gamma(1), delta(1), epsilon(1). CF(0) has three main subunits: a, b and c.

Its subcellular location is the cellular thylakoid membrane. Its function is as follows. Produces ATP from ADP in the presence of a proton gradient across the membrane. The protein is ATP synthase epsilon chain of Prochlorococcus marinus (strain SARG / CCMP1375 / SS120).